A 194-amino-acid chain; its full sequence is MNIVILLLILTFSIKHSNTYKLKNTYIPINYMYHNNKNILRSQKSKLFLNFLSNNQLANSNKQTCFFKSNIKSSISNIDNYDYIRKRYINTSNKNKLFYNITLRTNDGEKKIECNEDEYILDASERQNVELPYSCRGGSCSTCAAKLVEGEVDNDDQSYLDEEQIKKKYILLCTCYPKSDCVIETHKEDELHDM.

Residues 1-19 constitute an apicoplast transit peptide; sequence MNIVILLLILTFSIKHSNT. A 2Fe-2S ferredoxin-type domain is found at 99-189; the sequence is YNITLRTNDG…DCVIETHKED (91 aa). 4 residues coordinate [2Fe-2S] cluster: Cys-135, Cys-140, Cys-143, and Cys-173.

This sequence belongs to the 2Fe2S plant-type ferredoxin family. [2Fe-2S] cluster is required as a cofactor.

The protein localises to the plastid. It is found in the apicoplast. Functionally, ferredoxins are iron-sulfur proteins that transfer electrons in a wide variety of metabolic reactions. By transferring electrons to 4-hydroxy-3-methylbut-2-enyl diphosphate reductase LytB/IspH, plays a role in the terminal step of the DOXP/MEP pathway for isoprenoid precursor biosynthesis. This is Ferredoxin, apicoplast from Plasmodium falciparum (isolate 3D7).